We begin with the raw amino-acid sequence, 287 residues long: Co-chaperone protein DjlA (287 aa).

Topologically, residues 1-6 (MQIFGK) are periplasmic. Residues 7-30 (ILGAFFGFLFGGVFGALFGLFIGH) traverse the membrane as a helical segment. Residues 31–287 (QFDKARRLSQ…DLIKKEKGFK (257 aa)) lie on the Cytoplasmic side of the membrane. A disordered region spans residues 192-213 (GGFGGQQHQSHHSSSHGGWQQA). The J domain occupies 221 to 287 (DAYKILGIDA…DLIKKEKGFK (67 aa)).

As to quaternary structure, homodimer.

The protein resides in the cell inner membrane. Its function is as follows. Regulatory DnaK co-chaperone. Direct interaction between DnaK and DjlA is needed for the induction of the wcaABCDE operon, involved in the synthesis of a colanic acid polysaccharide capsule, possibly through activation of the RcsB/RcsC phosphotransfer signaling pathway. The colanic acid capsule may help the bacterium survive conditions outside the host. In Vibrio vulnificus (strain YJ016), this protein is Co-chaperone protein DjlA.